A 102-amino-acid polypeptide reads, in one-letter code: MVGNMNIRDKIKSIKNWINFIKPIITIVGIVISAVAFTISILWGMLFLILFLILITFSKTIRKILSKKERSYQGLILSIIGSIIIISIIVYSHCYIEFKLLI.

3 helical membrane-spanning segments follow: residues 14-34 (IKNW…VISA), 35-55 (VAFT…LILI), and 76-96 (ILSI…HCYI).

The protein localises to the cell membrane. This is an uncharacterized protein from Methanocaldococcus jannaschii (strain ATCC 43067 / DSM 2661 / JAL-1 / JCM 10045 / NBRC 100440) (Methanococcus jannaschii).